The chain runs to 360 residues: Alpha-2-HS-glycoprotein (360 aa).

The N-terminal stretch at 1-15 is a signal peptide; that stretch reads LVLLLSLAQLWSCHL. Positions 24-130 constitute a Cystatin fetuin-A-type 1 domain; it reads YREHNCDDPE…QFTVLSAKCD (107 aa). Disulfide bonds link Cys-29-Cys-351, Cys-86-Cys-97, Cys-111-Cys-129, Cys-143-Cys-146, Cys-205-Cys-216, and Cys-227-Cys-244. A glycan (N-linked (GlcNAc...) asparagine) is linked at Asn-96. Residue Ser-131 is modified to Phosphoserine. Thr-132 carries the phosphothreonine modification. Position 135 is a phosphoserine (Ser-135). The Cystatin fetuin-A-type 2 domain maps to 141–252; the sequence is KLCPDCPLLT…TCTIFPAQPV (112 aa). Asn-153 carries an N-linked (GlcNAc...) asparagine glycan. The interval 260–285 is disordered; it reads VAGAAAVEPAPAVDPASPVSPPDGQS. Thr-312 carries the post-translational modification Phosphothreonine. Ser-318, Ser-321, and Ser-323 each carry phosphoserine.

The protein belongs to the fetuin family. Post-translationally, phosphorylated by FAM20C in the extracellular medium. As to expression, bone marrow.

The protein localises to the secreted. Functionally, a cell adhesion protein that binds immature cells of the granulocyte lineage. The protein is Alpha-2-HS-glycoprotein (AHSG) of Oryctolagus cuniculus (Rabbit).